The sequence spans 240 residues: Proline-rich antigen homolog (240 aa).

Composition is skewed to pro residues over residues 1-31 (MTEQ…PAAP) and 38-78 (APPP…PPGP). A disordered region spans residues 1–78 (MTEQPPPGGS…GGYAPPPPGP (78 aa)). Residues 89–233 (TPWITRVLAA…KRQTLADKIM (145 aa)) form the RDD domain. Transmembrane regions (helical) follow at residues 98 to 118 (AFID…IMLV), 142 to 162 (SMIG…YLVW), and 203 to 223 (LAHF…LWDA).

It belongs to the mycobacterial Pra family.

It localises to the cell membrane. The protein is Proline-rich antigen homolog of Mycobacterium tuberculosis (strain CDC 1551 / Oshkosh).